The chain runs to 429 residues: Ubiquinone hydroxylase UbiL (429 aa).

A disordered region spans residues 1–22 (MSEPLLRGLAAGDPPSATGPVT).

The protein belongs to the UbiH/COQ6 family. The cofactor is FAD.

The enzyme catalyses a 2-(all-trans-polyprenyl)phenol + NADPH + O2 + H(+) = a 3-(all-trans-polyprenyl)benzene-1,2-diol + NADP(+) + H2O. It participates in cofactor biosynthesis; ubiquinone biosynthesis. Its function is as follows. Catalyzes the hydroxylation of two positions of the aromatic ring during ubiquinone biosynthesis. This is Ubiquinone hydroxylase UbiL from Rhodospirillum rubrum (strain ATCC 11170 / ATH 1.1.1 / DSM 467 / LMG 4362 / NCIMB 8255 / S1).